Consider the following 212-residue polypeptide: Protein-L-isoaspartate O-methyltransferase (212 aa).

Serine 61 is a catalytic residue.

It belongs to the methyltransferase superfamily. L-isoaspartyl/D-aspartyl protein methyltransferase family.

The protein localises to the cytoplasm. It carries out the reaction [protein]-L-isoaspartate + S-adenosyl-L-methionine = [protein]-L-isoaspartate alpha-methyl ester + S-adenosyl-L-homocysteine. Its function is as follows. Catalyzes the methyl esterification of L-isoaspartyl residues in peptides and proteins that result from spontaneous decomposition of normal L-aspartyl and L-asparaginyl residues. It plays a role in the repair and/or degradation of damaged proteins. This chain is Protein-L-isoaspartate O-methyltransferase, found in Pseudoalteromonas atlantica (strain T6c / ATCC BAA-1087).